A 253-amino-acid polypeptide reads, in one-letter code: Ubiquinone/menaquinone biosynthesis C-methyltransferase UbiE (253 aa).

S-adenosyl-L-methionine contacts are provided by residues T76, D97, and N125–A126.

It belongs to the class I-like SAM-binding methyltransferase superfamily. MenG/UbiE family.

It carries out the reaction a 2-demethylmenaquinol + S-adenosyl-L-methionine = a menaquinol + S-adenosyl-L-homocysteine + H(+). The enzyme catalyses a 2-methoxy-6-(all-trans-polyprenyl)benzene-1,4-diol + S-adenosyl-L-methionine = a 5-methoxy-2-methyl-3-(all-trans-polyprenyl)benzene-1,4-diol + S-adenosyl-L-homocysteine + H(+). It participates in quinol/quinone metabolism; menaquinone biosynthesis; menaquinol from 1,4-dihydroxy-2-naphthoate: step 2/2. The protein operates within cofactor biosynthesis; ubiquinone biosynthesis. Methyltransferase required for the conversion of demethylmenaquinol (DMKH2) to menaquinol (MKH2) and the conversion of 2-polyprenyl-6-methoxy-1,4-benzoquinol (DDMQH2) to 2-polyprenyl-3-methyl-6-methoxy-1,4-benzoquinol (DMQH2). The chain is Ubiquinone/menaquinone biosynthesis C-methyltransferase UbiE from Rhodopseudomonas palustris (strain ATCC BAA-98 / CGA009).